We begin with the raw amino-acid sequence, 448 residues long: uncharacterized protein (448 aa).

The uDENN domain occupies 4 to 155 (QAIVLATFDA…SAVNLEFDSL (152 aa)). In terms of domain architecture, cDENN spans 183–326 (LDHLGPAFYC…FKGLSRYLSF (144 aa)). Residues 328-428 (GESSWGLTTY…WQYGKYFWLR (101 aa)) enclose the dDENN domain. The helical transmembrane segment at 425-447 (FWLRRVSLIFLASTCFLFILWKL) threads the bilayer.

The protein resides in the golgi apparatus membrane. It is found in the endoplasmic reticulum membrane. This is an uncharacterized protein from Schizosaccharomyces pombe (strain 972 / ATCC 24843) (Fission yeast).